The sequence spans 269 residues: 5'-nucleotidase SurE (269 aa).

A divalent metal cation contacts are provided by Asp-11, Asp-12, Ser-43, and Asn-101.

The protein belongs to the SurE nucleotidase family. It depends on a divalent metal cation as a cofactor.

The protein resides in the cytoplasm. The catalysed reaction is a ribonucleoside 5'-phosphate + H2O = a ribonucleoside + phosphate. Its function is as follows. Nucleotidase that shows phosphatase activity on nucleoside 5'-monophosphates. The chain is 5'-nucleotidase SurE from Prochlorococcus marinus (strain MIT 9303).